A 605-amino-acid polypeptide reads, in one-letter code: Protein spinster (605 aa).

The segment at 1 to 94 (MSLKHQKQSY…HPLGEHHHIP (94 aa)) is disordered. A compositionally biased stretch (low complexity) spans 27–38 (SSGSSGSSSSEE). Residues 55 to 67 (TTYSSQQLMPSDT) show a composition bias toward polar residues. The span at 76–85 (RLRPHHHHHH) shows a compositional bias: basic residues. The helical transmembrane segment at 115–137 (FTVTVLCFVNLINYMDRFTIAGV) threads the bilayer. A glycan (N-linked (GlcNAc...) asparagine) is linked at Asn149. The next 5 helical transmembrane spans lie at 153–173 (GLLQ…FGYL), 180–200 (PWIM…GSFM), 203–223 (FGWF…YSTI), 240–260 (MLAL…IVGS), and 271–291 (WALR…LLIK). N-linked (GlcNAc...) asparagine glycosylation is present at Asn319. The next 5 membrane-spanning stretches (helical) occupy residues 329-349 (FTCV…FIYL), 367-387 (FNFG…GSFL), 401-421 (VICA…CLLV), 431-451 (LIFF…DILL), and 465-485 (FQIL…VGAI). Asn519 carries an N-linked (GlcNAc...) asparagine glycan. A helical transmembrane segment spans residues 558-578 (STSFVEVLGGIFFIFTACFII). Asn583 carries an N-linked (GlcNAc...) asparagine glycan.

It belongs to the major facilitator superfamily. Spinster (TC 2.A.1.49) family. Enriched in brain (at protein level).

The protein localises to the late endosome membrane. It is found in the lysosome membrane. Its function is as follows. Probable sphingolipid transporter that plays a central role in endosomes and/or lysosomes storage. Involved in TGF-beta-mediated synaptic growth regulation both pre- and postsynaptically via its function in endosomal storage regulation. Also required during oogenesis by regulating yolk spheres storage. This Drosophila melanogaster (Fruit fly) protein is Protein spinster (spin).